A 736-amino-acid polypeptide reads, in one-letter code: Phosphoribosylformylglycinamidine synthase subunit PurL (736 aa).

His-49 is a catalytic residue. Tyr-52 and Lys-91 together coordinate ATP. Glu-93 contributes to the Mg(2+) binding site. Residues Ser-94–His-97 and Arg-116 each bind substrate. Catalysis depends on His-95, which acts as the Proton acceptor. Mg(2+) is bound at residue Asp-117. Gln-240 provides a ligand contact to substrate. Asp-268 serves as a coordination point for Mg(2+). Glu-312–Gln-314 is a binding site for substrate. The ATP site is built by Asp-493 and Gly-530. Asn-531 is a binding site for Mg(2+). Ser-533 contributes to the substrate binding site.

Belongs to the FGAMS family. As to quaternary structure, monomer. Part of the FGAM synthase complex composed of 1 PurL, 1 PurQ and 2 PurS subunits.

The protein localises to the cytoplasm. It catalyses the reaction N(2)-formyl-N(1)-(5-phospho-beta-D-ribosyl)glycinamide + L-glutamine + ATP + H2O = 2-formamido-N(1)-(5-O-phospho-beta-D-ribosyl)acetamidine + L-glutamate + ADP + phosphate + H(+). It functions in the pathway purine metabolism; IMP biosynthesis via de novo pathway; 5-amino-1-(5-phospho-D-ribosyl)imidazole from N(2)-formyl-N(1)-(5-phospho-D-ribosyl)glycinamide: step 1/2. Its function is as follows. Part of the phosphoribosylformylglycinamidine synthase complex involved in the purines biosynthetic pathway. Catalyzes the ATP-dependent conversion of formylglycinamide ribonucleotide (FGAR) and glutamine to yield formylglycinamidine ribonucleotide (FGAM) and glutamate. The FGAM synthase complex is composed of three subunits. PurQ produces an ammonia molecule by converting glutamine to glutamate. PurL transfers the ammonia molecule to FGAR to form FGAM in an ATP-dependent manner. PurS interacts with PurQ and PurL and is thought to assist in the transfer of the ammonia molecule from PurQ to PurL. This Rhodopseudomonas palustris (strain HaA2) protein is Phosphoribosylformylglycinamidine synthase subunit PurL.